Here is a 266-residue protein sequence, read N- to C-terminus: Probable phosphoadenosine phosphosulfate reductase (266 aa).

The disordered stretch occupies residues 219-246 (TQPVREGEDERAGRWRGREKTECGLHSH). The segment covering 223–243 (REGEDERAGRWRGREKTECGL) has biased composition (basic and acidic residues).

This sequence belongs to the PAPS reductase family. CysH subfamily.

The protein resides in the cytoplasm. It localises to the nucleus. The catalysed reaction is [thioredoxin]-disulfide + sulfite + adenosine 3',5'-bisphosphate + 2 H(+) = [thioredoxin]-dithiol + 3'-phosphoadenylyl sulfate. It functions in the pathway sulfur metabolism; hydrogen sulfide biosynthesis; sulfite from sulfate: step 3/3. Functionally, the NADP dependent reduction of PAPS into sulfite involves thioredoxin which probably plays the role of a thiol carrier. Required for methionine synthesis. The protein is Probable phosphoadenosine phosphosulfate reductase (met16) of Schizosaccharomyces pombe (strain 972 / ATCC 24843) (Fission yeast).